Consider the following 535-residue polypeptide: CTP synthase (535 aa).

The segment at 1–267 (MTKYIFVTGG…DQIVCDHLKL (267 aa)) is amidoligase domain. S13 contacts CTP. Position 13 (S13) interacts with UTP. Residue 14–19 (SLGKGI) coordinates ATP. Y54 provides a ligand contact to L-glutamine. Residue D71 coordinates ATP. Positions 71 and 141 each coordinate Mg(2+). CTP contacts are provided by residues 148–150 (DIE), 188–193 (KTKPTQ), and K224. UTP contacts are provided by residues 188-193 (KTKPTQ) and K224. 240–242 (RDA) lines the ATP pocket. Residues 292-534 (KIALVGKYVE…VRASITNKES (243 aa)) enclose the Glutamine amidotransferase type-1 domain. L-glutamine is bound at residue G354. The active-site Nucleophile; for glutamine hydrolysis is the C381. Residues 382-385 (LGMQ), E405, and R462 contribute to the L-glutamine site. Active-site residues include H507 and E509.

The protein belongs to the CTP synthase family. In terms of assembly, homotetramer.

It catalyses the reaction UTP + L-glutamine + ATP + H2O = CTP + L-glutamate + ADP + phosphate + 2 H(+). The enzyme catalyses L-glutamine + H2O = L-glutamate + NH4(+). It carries out the reaction UTP + NH4(+) + ATP = CTP + ADP + phosphate + 2 H(+). It participates in pyrimidine metabolism; CTP biosynthesis via de novo pathway; CTP from UDP: step 2/2. With respect to regulation, allosterically activated by GTP, when glutamine is the substrate; GTP has no effect on the reaction when ammonia is the substrate. The allosteric effector GTP functions by stabilizing the protein conformation that binds the tetrahedral intermediate(s) formed during glutamine hydrolysis. Inhibited by the product CTP, via allosteric rather than competitive inhibition. In terms of biological role, catalyzes the ATP-dependent amination of UTP to CTP with either L-glutamine or ammonia as the source of nitrogen. Regulates intracellular CTP levels through interactions with the four ribonucleotide triphosphates. This Bacillus cereus (strain ATCC 14579 / DSM 31 / CCUG 7414 / JCM 2152 / NBRC 15305 / NCIMB 9373 / NCTC 2599 / NRRL B-3711) protein is CTP synthase.